Reading from the N-terminus, the 247-residue chain is Triosephosphate isomerase (247 aa).

9-11 provides a ligand contact to substrate; it reads NWK. Residue His-94 is the Electrophile of the active site. Residue Glu-166 is the Proton acceptor of the active site. Residues Gly-172, Ser-211, and 232 to 233 each bind substrate; that span reads GG.

It belongs to the triosephosphate isomerase family. As to quaternary structure, homodimer.

It is found in the cytoplasm. It carries out the reaction D-glyceraldehyde 3-phosphate = dihydroxyacetone phosphate. It participates in carbohydrate biosynthesis; gluconeogenesis. Its pathway is carbohydrate degradation; glycolysis; D-glyceraldehyde 3-phosphate from glycerone phosphate: step 1/1. Functionally, involved in the gluconeogenesis. Catalyzes stereospecifically the conversion of dihydroxyacetone phosphate (DHAP) to D-glyceraldehyde-3-phosphate (G3P). The chain is Triosephosphate isomerase from Cupriavidus taiwanensis (strain DSM 17343 / BCRC 17206 / CCUG 44338 / CIP 107171 / LMG 19424 / R1) (Ralstonia taiwanensis (strain LMG 19424)).